Consider the following 555-residue polypeptide: Potassium-transporting ATPase potassium-binding subunit (555 aa).

10 helical membrane passes run 2-22 (IWVA…PTGI), 60-80 (QYAL…YFIF), 130-150 (IGIT…VMAF), 173-193 (VFLP…VPQT), 246-266 (MSNI…PFTY), 278-298 (ILFV…TTSE), 374-394 (AGFV…GLMV), 412-432 (LIAV…ALAL), 483-503 (LVMF…AASL), and 525-545 (GIFI…MLVL).

This sequence belongs to the KdpA family. The system is composed of three essential subunits: KdpA, KdpB and KdpC.

Its subcellular location is the cell membrane. Part of the high-affinity ATP-driven potassium transport (or Kdp) system, which catalyzes the hydrolysis of ATP coupled with the electrogenic transport of potassium into the cytoplasm. This subunit binds the extracellular potassium ions and delivers the ions to the membrane domain of KdpB through an intramembrane tunnel. The polypeptide is Potassium-transporting ATPase potassium-binding subunit (Bacillus cereus (strain G9842)).